Consider the following 401-residue polypeptide: S-adenosylmethionine synthase (401 aa).

135–140 (GHGSGD) provides a ligand contact to ATP.

It belongs to the AdoMet synthase 2 family. Mg(2+) is required as a cofactor.

It catalyses the reaction L-methionine + ATP + H2O = S-adenosyl-L-methionine + phosphate + diphosphate. Its pathway is amino-acid biosynthesis; S-adenosyl-L-methionine biosynthesis; S-adenosyl-L-methionine from L-methionine: step 1/1. Its function is as follows. Catalyzes the formation of S-adenosylmethionine from methionine and ATP. This chain is S-adenosylmethionine synthase (mat), found in Methanothermobacter marburgensis (strain ATCC BAA-927 / DSM 2133 / JCM 14651 / NBRC 100331 / OCM 82 / Marburg) (Methanobacterium thermoautotrophicum).